We begin with the raw amino-acid sequence, 333 residues long: Glycerol-3-phosphate dehydrogenase [NAD(P)+] (333 aa).

NADPH contacts are provided by serine 10, tryptophan 11, histidine 31, arginine 32, and lysine 105. Positions 105, 136, and 138 each coordinate sn-glycerol 3-phosphate. An NADPH-binding site is contributed by alanine 140. Sn-glycerol 3-phosphate-binding residues include lysine 191, aspartate 244, serine 254, arginine 255, and asparagine 256. Residue lysine 191 is the Proton acceptor of the active site. Residue arginine 255 participates in NADPH binding. Residues isoleucine 279 and glutamate 281 each contribute to the NADPH site.

This sequence belongs to the NAD-dependent glycerol-3-phosphate dehydrogenase family.

The protein localises to the cytoplasm. The catalysed reaction is sn-glycerol 3-phosphate + NAD(+) = dihydroxyacetone phosphate + NADH + H(+). It carries out the reaction sn-glycerol 3-phosphate + NADP(+) = dihydroxyacetone phosphate + NADPH + H(+). It functions in the pathway membrane lipid metabolism; glycerophospholipid metabolism. In terms of biological role, catalyzes the reduction of the glycolytic intermediate dihydroxyacetone phosphate (DHAP) to sn-glycerol 3-phosphate (G3P), the key precursor for phospholipid synthesis. This Chlorobium chlorochromatii (strain CaD3) protein is Glycerol-3-phosphate dehydrogenase [NAD(P)+].